A 95-amino-acid polypeptide reads, in one-letter code: Aspartyl/glutamyl-tRNA(Asn/Gln) amidotransferase subunit C (95 aa).

The protein belongs to the GatC family. Heterotrimer of A, B and C subunits.

It catalyses the reaction L-glutamyl-tRNA(Gln) + L-glutamine + ATP + H2O = L-glutaminyl-tRNA(Gln) + L-glutamate + ADP + phosphate + H(+). The enzyme catalyses L-aspartyl-tRNA(Asn) + L-glutamine + ATP + H2O = L-asparaginyl-tRNA(Asn) + L-glutamate + ADP + phosphate + 2 H(+). Functionally, allows the formation of correctly charged Asn-tRNA(Asn) or Gln-tRNA(Gln) through the transamidation of misacylated Asp-tRNA(Asn) or Glu-tRNA(Gln) in organisms which lack either or both of asparaginyl-tRNA or glutaminyl-tRNA synthetases. The reaction takes place in the presence of glutamine and ATP through an activated phospho-Asp-tRNA(Asn) or phospho-Glu-tRNA(Gln). The sequence is that of Aspartyl/glutamyl-tRNA(Asn/Gln) amidotransferase subunit C from Chlorobium phaeobacteroides (strain BS1).